A 71-amino-acid polypeptide reads, in one-letter code: Potassium voltage-gated channel subfamily E member 2 (71 aa).

A helical transmembrane segment spans residues 7–27; sequence VILYLMVMIGMFSFIIVAILV. Over 28 to 71 the chain is Cytoplasmic; it reads STVKSKRREHSNDPYHQYIVEDWQEKYKSQILHFEEAKATIHEN.

The protein belongs to the potassium channel KCNE family. In terms of assembly, interacts with KCNB1. Associates with KCNH2/ERG1. May associate with KCNQ2 and KCNQ3. Associates with HCN1 and probably HCN2. Heteromultimer with KCNC2. Interacts with KCNC2. Interacts with KCNQ1; forms a heterooligomer complex that targets to the membrane raft and leading to currents with an apparently instantaneous activation, a rapid deactivation process and a linear current-voltage relationship and decreases the amplitude of the outward current. Detected in heart; expression is highest in the SA node and the right atrium, and barely detectable in the ventricle.

It localises to the cell membrane. The protein resides in the apical cell membrane. Ancillary protein that functions as a regulatory subunit of the voltage-gated potassium (Kv) channel complex composed of pore-forming and potassium-conducting alpha subunits and of regulatory beta subunits. KCNE2 beta subunit modulates the gating kinetics and enhances stability of the channel complex. Alters the gating of the delayed rectifier Kv channel containing KCNB1 alpha subunit. Associates with KCNH2/HERG alpha subunit Kv channel to form the rapidly activating component of the delayed rectifying potassium current (IKr) in heart. May associate with KCNQ2 and/or KCNQ3 alpha subunits to modulate the native M-type current. May associate with HCN1 and HCN2 channel subunits to increase potassium current. Forms a heterooligomer complex with KCNQ1/KVLQT1 alpha subunits which leads to currents with an apparently instantaneous activation, a rapid deactivation process and a linear current-voltage relationship and decreases the amplitude of the outward current. KCNQ1-KCNE2 channel associates with Na(+)-coupled myo-inositol symporter in the apical membrane of choroid plexus epithelium and regulates the myo-inositol gradient between blood and cerebrospinal fluid with an impact on neuron excitability. The protein is Potassium voltage-gated channel subfamily E member 2 (KCNE2) of Oryctolagus cuniculus (Rabbit).